Here is a 348-residue protein sequence, read N- to C-terminus: Heat-inducible transcription repressor HrcA (348 aa).

The protein belongs to the HrcA family.

Its function is as follows. Negative regulator of class I heat shock genes (grpE-dnaK-dnaJ and groELS operons). Prevents heat-shock induction of these operons. This is Heat-inducible transcription repressor HrcA from Thermomicrobium roseum (strain ATCC 27502 / DSM 5159 / P-2).